The chain runs to 320 residues: Aspartate carbamoyltransferase catalytic subunit (320 aa).

The carbamoyl phosphate site is built by R58 and T59. Residue K86 coordinates L-aspartate. Residues R108, H136, and Q139 each contribute to the carbamoyl phosphate site. Residues R169 and R223 each coordinate L-aspartate. G264 and P265 together coordinate carbamoyl phosphate.

The protein belongs to the aspartate/ornithine carbamoyltransferase superfamily. ATCase family. As to quaternary structure, heterododecamer (2C3:3R2) of six catalytic PyrB chains organized as two trimers (C3), and six regulatory PyrI chains organized as three dimers (R2).

It carries out the reaction carbamoyl phosphate + L-aspartate = N-carbamoyl-L-aspartate + phosphate + H(+). Its pathway is pyrimidine metabolism; UMP biosynthesis via de novo pathway; (S)-dihydroorotate from bicarbonate: step 2/3. In terms of biological role, catalyzes the condensation of carbamoyl phosphate and aspartate to form carbamoyl aspartate and inorganic phosphate, the committed step in the de novo pyrimidine nucleotide biosynthesis pathway. This chain is Aspartate carbamoyltransferase catalytic subunit, found in Cereibacter sphaeroides (strain ATCC 17025 / ATH 2.4.3) (Rhodobacter sphaeroides).